A 68-amino-acid polypeptide reads, in one-letter code: Small ribosomal subunit protein bS21 (68 aa).

Residues 39–68 (PPSVKRVRKKQESERRHRKERAMRRRMMEE) are disordered. A compositionally biased stretch (basic residues) spans 54–68 (RHRKERAMRRRMMEE).

It belongs to the bacterial ribosomal protein bS21 family.

This Orientia tsutsugamushi (strain Boryong) (Rickettsia tsutsugamushi) protein is Small ribosomal subunit protein bS21.